Here is a 355-residue protein sequence, read N- to C-terminus: Phosphoribosylformylglycinamidine cyclo-ligase (355 aa).

It belongs to the AIR synthase family.

It localises to the cytoplasm. It carries out the reaction 2-formamido-N(1)-(5-O-phospho-beta-D-ribosyl)acetamidine + ATP = 5-amino-1-(5-phospho-beta-D-ribosyl)imidazole + ADP + phosphate + H(+). It functions in the pathway purine metabolism; IMP biosynthesis via de novo pathway; 5-amino-1-(5-phospho-D-ribosyl)imidazole from N(2)-formyl-N(1)-(5-phospho-D-ribosyl)glycinamide: step 2/2. The protein is Phosphoribosylformylglycinamidine cyclo-ligase of Methylobacterium sp. (strain 4-46).